The chain runs to 357 residues: Chaperone protein DnaJ (357 aa).

The region spanning 4 to 69 (DYYAILGVDR…QKRKQYDETG (66 aa)) is the J domain. The segment at 132 to 213 (GASKNVKYRR…CHGTGTVSKN (82 aa)) adopts a CR-type zinc-finger fold. Zn(2+) contacts are provided by Cys145, Cys148, Cys161, Cys164, Cys187, Cys190, Cys201, and Cys204. 4 CXXCXGXG motif repeats span residues 145–152 (CEHCSGTG), 161–168 (CPTCHGSG), 187–194 (CRTCHGRG), and 201–208 (CTVCHGTG).

It belongs to the DnaJ family. Homodimer. Zn(2+) serves as cofactor.

The protein localises to the cytoplasm. Functionally, participates actively in the response to hyperosmotic and heat shock by preventing the aggregation of stress-denatured proteins and by disaggregating proteins, also in an autonomous, DnaK-independent fashion. Unfolded proteins bind initially to DnaJ; upon interaction with the DnaJ-bound protein, DnaK hydrolyzes its bound ATP, resulting in the formation of a stable complex. GrpE releases ADP from DnaK; ATP binding to DnaK triggers the release of the substrate protein, thus completing the reaction cycle. Several rounds of ATP-dependent interactions between DnaJ, DnaK and GrpE are required for fully efficient folding. Also involved, together with DnaK and GrpE, in the DNA replication of plasmids through activation of initiation proteins. The sequence is that of Chaperone protein DnaJ from Picrophilus torridus (strain ATCC 700027 / DSM 9790 / JCM 10055 / NBRC 100828 / KAW 2/3).